We begin with the raw amino-acid sequence, 478 residues long: MGATKILMDSTHFNEIRSIIRSRSVAWDALARSEELSEIDASTAKALESILVKKNIGDGLSSSNNAHSGFKVNGKTLIPLIHLLSTSDNEDCKKSVQNLIAELLSSDKYGDDTVKFFQEDPKQLEQLFDVSLKGDFQTVLISGFNVVSLLVQNGLHNVKLVEKLLKNNNLINILQNIEQMDTCYVCIRLLQELAVIPEYRDVIWLHEKKFMPTLFKILQRATDSQLATRIVATNSNHLGIQLQYHSLLLIWLLTFNPVFANELVQKYLSDFLDLLKLVKITIKEKVSRLCISIILQCCSTRVKQHKKVIKQLLLLGNALPTVQSLSERKYSDEELRQDISNLKEILENEYQELTSFDEYVAELDSKLLCWSPPHVDNGFWSDNIDEFKKDNYKIFRQLIELLQAKVRNGDVNAKQEKIIIQVALNDITHVVELLPESIDVLDKTGGKADIMELLNHSDSRVKYEALKATQAIIGYTFK.

Belongs to the V-ATPase H subunit family. V-ATPase is a heteromultimeric enzyme composed of a peripheral catalytic V1 complex (components A to H) attached to an integral membrane V0 proton pore complex (components: a, c, c', c'', d, e, f and VOA1). Interacts with YND1.

It localises to the vacuole membrane. In terms of biological role, subunit of the V1 complex of vacuolar(H+)-ATPase (V-ATPase), a multisubunit enzyme composed of a peripheral complex (V1) that hydrolyzes ATP and a membrane integral complex (V0) that translocates protons. V-ATPase is responsible for acidifying and maintaining the pH of intracellular compartments. This subunit is essential for activity, but not assembly, of the enzyme complex. This subunit is also required for silencing the ATPase activity of V-ATPase when V1 is detached from V0. This Saccharomyces cerevisiae (strain ATCC 204508 / S288c) (Baker's yeast) protein is V-type proton ATPase subunit H.